The chain runs to 57 residues: uncharacterized protein (57 aa).

This is an uncharacterized protein from His1 virus (isolate Australia/Victoria) (His1V).